The sequence spans 141 residues: MAMTLQCDIVSAEREIFSGLVEMVVATGALGDLGVAYGHAPLLTSINPGPVRVIKQGGTEEIFYVSGGYLEVQPYHVTVLADTALRANDMDEAAALEAQERAQHQLAEQASEIDFQRAAVQLAEAAAQLRTLQAIKKKAGK.

The protein belongs to the ATPase epsilon chain family. F-type ATPases have 2 components, CF(1) - the catalytic core - and CF(0) - the membrane proton channel. CF(1) has five subunits: alpha(3), beta(3), gamma(1), delta(1), epsilon(1). CF(0) has three main subunits: a, b and c.

Its subcellular location is the cell inner membrane. Produces ATP from ADP in the presence of a proton gradient across the membrane. In Cellvibrio japonicus (strain Ueda107) (Pseudomonas fluorescens subsp. cellulosa), this protein is ATP synthase epsilon chain.